Here is a 76-residue protein sequence, read N- to C-terminus: Conotoxin TsMLCL-03 (76 aa).

Positions 1–19 (MLCLPVFIILLLLASPAAP) are cleaved as a signal peptide. A propeptide spanning residues 20-44 (NPLERRIQSDLIRTALEDADMKTPK) is cleaved from the precursor.

The protein belongs to the conotoxin T superfamily. In terms of processing, contains 2 disulfide bonds that can be either 'C1-C3, C2-C4' or 'C1-C4, C2-C3', since these disulfide connectivities have been observed for conotoxins with cysteine framework V (for examples, see AC P0DQQ7 and AC P81755). Expressed by the venom duct.

It is found in the secreted. This is Conotoxin TsMLCL-03 from Conus tessulatus (Tessellate cone).